A 342-amino-acid polypeptide reads, in one-letter code: Trans-3-hydroxy-L-proline dehydratase (342 aa).

The active-site Proton acceptor is the Ser90. Substrate is bound by residues 91-92 (GS), Asp251, and 256-257 (GT).

It belongs to the proline racemase family.

It carries out the reaction trans-3-hydroxy-L-proline = 1-pyrroline-2-carboxylate + H2O. Its function is as follows. Catalyzes the dehydration of trans-3-hydroxy-L-proline (t3LHyp) to Delta(1)-pyrroline-2-carboxylate (Pyr2C). Displays neither proline racemase activity nor 4-hydroxyproline 2-epimerase activity. This is Trans-3-hydroxy-L-proline dehydratase from Brucella suis biovar 1 (strain 1330).